Reading from the N-terminus, the 349-residue chain is MTEFDNLTWLHGKPQGSGLLKANPEDFVVVEDLGFTPDGEGEHILLRILKNGCNTRFVADALAKFLKIHAREVSFAGQKDKHAVTEQWLCARVPGKEMPDFSAFQLEGCKVLEYARHKRKLRLGALKGNAFTLVLREISDRRDVETRLQAIRDGGVPNYFGAQRFGIGGSNLQGALRWAQSNAPVRDRNKRSFWLSAARSALFNQIVHQRLKKPDFNQVVDGDALQLAGRGSWFVATSEELPELQRRVDEKELMITASLPGSGEWGTQRAALAFEQDAIAQETVLQSLLLREKVEASRRAMLLYPQQLSWNWWDDVTVELRFWLPAGSFATSVVRGLINTMGDYAHIAE.

A substrate-binding site is contributed by Phe27. Asp80 acts as the Nucleophile in catalysis. Asn129 is a binding site for substrate. Residues 155–303 (GVPNYFGAQR…VEASRRAMLL (149 aa)) form the TRUD domain. Residue Phe329 coordinates substrate.

Belongs to the pseudouridine synthase TruD family.

It catalyses the reaction uridine(13) in tRNA = pseudouridine(13) in tRNA. Functionally, responsible for synthesis of pseudouridine from uracil-13 in transfer RNAs. This chain is tRNA pseudouridine synthase D, found in Salmonella choleraesuis (strain SC-B67).